We begin with the raw amino-acid sequence, 172 residues long: NADH dehydrogenase [ubiquinone] 1 alpha subcomplex subunit 8 (172 aa).

2 CHCH domains span residues 33 to 74 (GAQC…FRQI) and 75 to 118 (KRHC…MGWV). Short sequence motifs (cx9C motif) lie at residues 36–46 (CDKPNKEFMLC), 56–66 (CLEEGKLVNKC), 78–88 (CAEPFTEYWTC), and 100–110 (CRKQQAKFDEC). 4 disulfide bridges follow: Cys36–Cys66, Cys46–Cys56, Cys78–Cys110, and Cys88–Cys100. Positions 133–159 (TDRPLPENPYHSRPRPDPSPEIEGDLK) are disordered. The segment covering 146–159 (PRPDPSPEIEGDLK) has biased composition (basic and acidic residues).

The protein belongs to the complex I NDUFA8 subunit family. Complex I is composed of 45 different subunits.

The protein resides in the mitochondrion inner membrane. It localises to the mitochondrion intermembrane space. Its subcellular location is the mitochondrion. Its function is as follows. Accessory subunit of the mitochondrial membrane respiratory chain NADH dehydrogenase (Complex I), that is believed not to be involved in catalysis. Complex I functions in the transfer of electrons from NADH to the respiratory chain. The immediate electron acceptor for the enzyme is believed to be ubiquinone. In Pongo abelii (Sumatran orangutan), this protein is NADH dehydrogenase [ubiquinone] 1 alpha subcomplex subunit 8 (NDUFA8).